A 170-amino-acid polypeptide reads, in one-letter code: Cathelicidin antimicrobial peptide (170 aa).

The N-terminal stretch at 1–30 (MKTQRDSPSLGRWSLVLLLLGLVMPLAIVA) is a signal peptide. Residues 31–131 (QVLSYQEAVL…DISCDKDNRR (101 aa)) constitute a propeptide, cathelin-like domain (CLD). Cystine bridges form between cysteine 86–cysteine 97 and cysteine 108–cysteine 125. An active core region spans residues 150–162 (LKKVGQKIKDFLG).

It belongs to the cathelicidin family. Monomer, homodimer or homotrimer (in vitro). Oligomerizes as tetra- or hexamer in solution (in vitro). Proteolytically cleaved by proteinase PRTN3 into antibacterial peptide LL-37. Proteolytically cleaved by cathepsin CTSG and neutrophil elastase ELANE. Post-translationally, resistant to proteolytic degradation in solution, and when bound to both zwitterionic (mimicking mammalian membranes) and negatively charged membranes (mimicking bacterial membranes). In terms of processing, after secretion onto the skin surface, the CAMP gene product is processed by a serine protease-dependent mechanism into multiple novel antimicrobial peptides distinct from and shorter than cathelicidin LL-37. These peptides show enhanced antimicrobial action, acquiring the ability to kill skin pathogens such as S.aureus, E.coli and C.albicans. These peptides have lost the ability to stimulate CXCL8/IL8 release from keratinocytes. The peptides act synergistically, killing bacteria at lower concentrations when present together, and maintain activity at increased salt condition.

The protein resides in the secreted. It is found in the vesicle. Antimicrobial protein that is an integral component of the innate immune system. Binds to bacterial lipopolysaccharides (LPS). Acts via neutrophil N-formyl peptide receptors to enhance the release of CXCL2. Postsecretory processing generates multiple cathelicidin antimicrobial peptides with various lengths which act as a topical antimicrobial defense in sweat on skin. The unprocessed precursor form, cathelicidin antimicrobial peptide, inhibits the growth of Gram-negative E.coli and E.aerogenes with efficiencies comparable to that of the mature peptide LL-37 (in vitro). Functionally, antimicrobial peptide that is an integral component of the innate immune system. Binds to bacterial lipopolysaccharides (LPS). Causes membrane permeabilization by forming transmembrane pores (in vitro). Causes lysis of E.coli. Exhibits antimicrobial activity against Gram-negative bacteria such as P.aeruginosa, S.typhimurium, E.aerogenes, E.coli and P.syringae, Gram-positive bacteria such as L.monocytogenes, S.epidermidis, S.pyogenes and S.aureus, as well as vancomycin-resistant enterococci (in vitro). Exhibits antimicrobial activity against methicillin-resistant S.aureus, P.mirabilis, and C.albicans in low-salt media, but not in media containing 100 mM NaCl (in vitro). Forms chiral supramolecular assemblies with quinolone signal (PQS) molecules of P.aeruginosa, which may lead to interference of bacterial quorum signaling and perturbance of bacterial biofilm formation. May form supramolecular fiber-like assemblies on bacterial membranes. Induces cytokine and chemokine producation as well as TNF/TNFA and CSF2/GMCSF production in normal human keratinocytes. Exhibits hemolytic activity against red blood cells. In terms of biological role, exhibits antimicrobial activity against E.coli and B.megaterium (in vitro). In Macaca fascicularis (Crab-eating macaque), this protein is Cathelicidin antimicrobial peptide.